A 142-amino-acid chain; its full sequence is MSFFRGTFSTSSLFINTVDSVTKRFATKKSAGSTKNGRTSQPKNLGLKKSGNQLVYPGEIIIRQRGTEFHPGTFVGMGKDHTIFSKTIGLVSFSKEPKFPGSKKTRRFISVAPLYTNNININTNIDTSIDTNVNNNNSNINI.

Residues 27–48 (TKKSAGSTKNGRTSQPKNLGLK) form a disordered region. The span at 30-43 (SAGSTKNGRTSQPK) shows a compositional bias: polar residues.

This sequence belongs to the bacterial ribosomal protein bL27 family.

It localises to the mitochondrion. This Dictyostelium discoideum (Social amoeba) protein is Large ribosomal subunit protein bL27m (mrpl27).